The chain runs to 413 residues: 5'-deoxyadenosine deaminase (413 aa).

Zn(2+)-binding residues include histidine 57 and histidine 59. The substrate site is built by glutamate 86 and histidine 171. Histidine 198 provides a ligand contact to Zn(2+). Substrate-binding residues include glutamate 201 and aspartate 286. Aspartate 286 serves as a coordination point for Zn(2+).

It belongs to the metallo-dependent hydrolases superfamily. MTA/SAH deaminase family. Homotetramer. Zn(2+) serves as cofactor.

The catalysed reaction is 5'-deoxyadenosine + H2O + H(+) = 5'-deoxyinosine + NH4(+). It catalyses the reaction S-adenosyl-L-homocysteine + H2O + H(+) = S-inosyl-L-homocysteine + NH4(+). The enzyme catalyses S-methyl-5'-thioadenosine + H2O + H(+) = S-methyl-5'-thioinosine + NH4(+). It carries out the reaction adenosine + H2O + H(+) = inosine + NH4(+). It functions in the pathway amino-acid biosynthesis; S-adenosyl-L-methionine biosynthesis. Its function is as follows. Catalyzes the deamination of three SAM-derived enzymatic products, namely 5'-deoxyadenosine, S-adenosyl-L-homocysteine, and 5'-methylthioadenosine, to produce the inosine analogs. Can also deaminate adenosine. The preferred substrate for this enzyme is 5'-deoxyadenosine, but all these substrates are efficiently deaminated. Likely functions in a S-adenosyl-L-methionine (SAM) recycling pathway from S-adenosyl-L-homocysteine (SAH) produced from SAM-dependent methylation reactions. May also be involved in the recycling of 5'-deoxyadenosine, whereupon the 5'-deoxyribose moiety of 5'-deoxyinosine is further metabolized to deoxyhexoses used for the biosynthesis of aromatic amino acids in methanogens. This Methanothrix thermoacetophila (strain DSM 6194 / JCM 14653 / NBRC 101360 / PT) (Methanosaeta thermophila) protein is 5'-deoxyadenosine deaminase.